The sequence spans 264 residues: ATP synthase subunit a (264 aa).

Helical transmembrane passes span 39 to 59 (LDTL…FYIV), 97 to 117 (VAPL…MDLV), 139 to 159 (TADP…VIFY), 205 to 225 (LFGN…LPWW), and 239 to 259 (LLVI…YISL).

This sequence belongs to the ATPase A chain family. As to quaternary structure, F-type ATPases have 2 components, CF(1) - the catalytic core - and CF(0) - the membrane proton channel. CF(1) has five subunits: alpha(3), beta(3), gamma(1), delta(1), epsilon(1). CF(0) has three main subunits: a(1), b(2) and c(9-12). The alpha and beta chains form an alternating ring which encloses part of the gamma chain. CF(1) is attached to CF(0) by a central stalk formed by the gamma and epsilon chains, while a peripheral stalk is formed by the delta and b chains.

The protein localises to the cell inner membrane. Functionally, key component of the proton channel; it plays a direct role in the translocation of protons across the membrane. This chain is ATP synthase subunit a, found in Coxiella burnetii (strain RSA 331 / Henzerling II).